The sequence spans 332 residues: Ketol-acid reductoisomerase (NAD(+)) (332 aa).

The KARI N-terminal Rossmann domain maps to 1–181 (MKIYYDQDAD…GATRAGVIQT (181 aa)). Residues 24–27 (YGSQ), S50, and 82–85 (DEKQ) each bind NAD(+). Residue H107 is part of the active site. G133 lines the NAD(+) pocket. The 146-residue stretch at 182 to 327 (TFKEETETDL…ARLRGMMPWL (146 aa)) folds into the KARI C-terminal knotted domain. Residues D190, E194, E226, and E230 each coordinate Mg(2+). A substrate-binding site is contributed by S251.

Belongs to the ketol-acid reductoisomerase family. The cofactor is Mg(2+).

The enzyme catalyses (2R)-2,3-dihydroxy-3-methylbutanoate + NAD(+) = (2S)-2-acetolactate + NADH + H(+). Its pathway is amino-acid biosynthesis; L-isoleucine biosynthesis; L-isoleucine from 2-oxobutanoate: step 2/4. The protein operates within amino-acid biosynthesis; L-valine biosynthesis; L-valine from pyruvate: step 2/4. Its function is as follows. Involved in the biosynthesis of branched-chain amino acids (BCAA). Catalyzes an alkyl-migration followed by a ketol-acid reduction of (S)-2-acetolactate (S2AL) to yield (R)-2,3-dihydroxy-isovalerate. In the isomerase reaction, S2AL is rearranged via a Mg-dependent methyl migration to produce 3-hydroxy-3-methyl-2-ketobutyrate (HMKB). In the reductase reaction, this 2-ketoacid undergoes a metal-dependent reduction by NADH to yield (R)-2,3-dihydroxy-isovalerate. This chain is Ketol-acid reductoisomerase (NAD(+)), found in Thermacetogenium phaeum (strain ATCC BAA-254 / DSM 26808 / PB).